The following is a 434-amino-acid chain: [Pyruvate dehydrogenase (acetyl-transferring)] kinase isozyme 1, mitochondrial (434 aa).

Residues 1 to 26 (MRLARLLRGGTSVRPLCAVPCASRSL) constitute a mitochondrion transit peptide. Position 136 is a phosphotyrosine; by FGFR1 (tyrosine 136). In terms of domain architecture, Histidine kinase spans 161 to 391 (TEYKESFGVD…DAVIYIKALS (231 aa)). Tyrosine 241 bears the Phosphotyrosine; by FGFR1, ABL1, FLT3 and JAK2 mark. Tyrosine 242 is modified (phosphotyrosine; by FGFR1). Residues 277–284 (ELFKNAMR), aspartate 316, 335–336 (ST), and 352–357 (GFGYGL) each bind ATP. Position 336 is a phosphothreonine (threonine 336). The residue at position 403 (lysine 403) is an N6-succinyllysine.

This sequence belongs to the PDK/BCKDK protein kinase family. As to quaternary structure, homodimer, and heterodimer with PDK2. Interacts with the pyruvate dehydrogenase complex subunit DLAT, and is part of the multimeric pyruvate dehydrogenase complex that contains multiple copies of pyruvate dehydrogenase (E1), dihydrolipoamide acetyltransferase (DLAT, E2) and lipoamide dehydrogenase (DLD, E3). Interacts with phosphoglycerate kinase PGK1; the interaction is direct, occurs under hypoxic conditions and leads to PDK1-mediated inhibition of pyruvate dehydrogenase complex activity. Post-translationally, phosphorylated by constitutively activated ABL1, FGFR1, FLT3 and JAK2 (in vitro), and this may also occur in cancer cells that express constitutively activated ABL1, FGFR1, FLT3 and JAK2. Phosphorylation at Tyr-241 and Tyr-242 strongly increases kinase activity, while phosphorylation at Tyr-136 has a lesser effect. Phosphorylated under hypoxic conditions at Thr-336 by phosphoglycerate kinase PGK1 which has an activating effect.

It localises to the mitochondrion matrix. It carries out the reaction L-seryl-[pyruvate dehydrogenase E1 alpha subunit] + ATP = O-phospho-L-seryl-[pyruvate dehydrogenase E1 alpha subunit] + ADP + H(+). In terms of biological role, kinase that plays a key role in regulation of glucose and fatty acid metabolism and homeostasis via phosphorylation of the pyruvate dehydrogenase subunits PDHA1 and PDHA2. This inhibits pyruvate dehydrogenase activity, and thereby regulates metabolite flux through the tricarboxylic acid cycle, down-regulates aerobic respiration and inhibits the formation of acetyl-coenzyme A from pyruvate. Plays an important role in cellular responses to hypoxia and is important for cell proliferation under hypoxia. The chain is [Pyruvate dehydrogenase (acetyl-transferring)] kinase isozyme 1, mitochondrial (Pdk1) from Mus musculus (Mouse).